The chain runs to 89 residues: Small ribosomal subunit protein bS20 (89 aa).

Composition is skewed to basic residues over residues 1–10 and 17–29; these read MANIKSKIKS and ARKRNSMIKSRVK. The tract at residues 1 to 29 is disordered; sequence MANIKSKIKSIKTMEKARKRNSMIKSRVK.

It belongs to the bacterial ribosomal protein bS20 family.

Binds directly to 16S ribosomal RNA. The protein is Small ribosomal subunit protein bS20 of Mycoplasmopsis pulmonis (strain UAB CTIP) (Mycoplasma pulmonis).